Consider the following 420-residue polypeptide: Gamma-glutamyl phosphate reductase (420 aa).

The protein belongs to the gamma-glutamyl phosphate reductase family.

It localises to the cytoplasm. It catalyses the reaction L-glutamate 5-semialdehyde + phosphate + NADP(+) = L-glutamyl 5-phosphate + NADPH + H(+). Its pathway is amino-acid biosynthesis; L-proline biosynthesis; L-glutamate 5-semialdehyde from L-glutamate: step 2/2. In terms of biological role, catalyzes the NADPH-dependent reduction of L-glutamate 5-phosphate into L-glutamate 5-semialdehyde and phosphate. The product spontaneously undergoes cyclization to form 1-pyrroline-5-carboxylate. In Streptococcus sanguinis (strain SK36), this protein is Gamma-glutamyl phosphate reductase.